The sequence spans 757 residues: 5-methyltetrahydropteroyltriglutamate--homocysteine methyltransferase (757 aa).

Residues 16–19 (RELK) and Lys-112 contribute to the 5-methyltetrahydropteroyltri-L-glutamate site. L-homocysteine is bound by residues 432–434 (IGS) and Glu-485. Residues 432 to 434 (IGS) and Glu-485 each bind L-methionine. 5-methyltetrahydropteroyltri-L-glutamate-binding positions include 516-517 (RC) and Trp-562. Asp-600 lines the L-homocysteine pocket. Asp-600 provides a ligand contact to L-methionine. Residue Glu-606 coordinates 5-methyltetrahydropteroyltri-L-glutamate. His-642, Cys-644, and Glu-666 together coordinate Zn(2+). His-695 serves as the catalytic Proton donor. Cys-727 lines the Zn(2+) pocket.

Belongs to the vitamin-B12 independent methionine synthase family. Zn(2+) is required as a cofactor.

The enzyme catalyses 5-methyltetrahydropteroyltri-L-glutamate + L-homocysteine = tetrahydropteroyltri-L-glutamate + L-methionine. The protein operates within amino-acid biosynthesis; L-methionine biosynthesis via de novo pathway; L-methionine from L-homocysteine (MetE route): step 1/1. Functionally, catalyzes the transfer of a methyl group from 5-methyltetrahydrofolate to homocysteine resulting in methionine formation. This Actinobacillus pleuropneumoniae serotype 5b (strain L20) protein is 5-methyltetrahydropteroyltriglutamate--homocysteine methyltransferase.